The chain runs to 666 residues: Probable potassium transport system protein Kup (666 aa).

12 helical membrane-spanning segments follow: residues 16 to 36 (GFII…LYTM), 58 to 78 (ISLI…LIAL), 100 to 120 (PWLI…GALT), 141 to 161 (IYQN…VLFG), 165 to 185 (FGTG…FSFL), 221 to 241 (IFIL…YSDL), 253 to 273 (WPFV…WILA), 294 to 314 (VYLV…LISG), 343 to 363 (LYIP…VLAF), 373 to 393 (YGLA…YYLI), 399 to 419 (PILA…FFLA), and 424 to 444 (FMHG…VMFI).

It belongs to the HAK/KUP transporter (TC 2.A.72) family.

It localises to the cell membrane. It catalyses the reaction K(+)(in) + H(+)(in) = K(+)(out) + H(+)(out). Its function is as follows. Transport of potassium into the cell. Likely operates as a K(+):H(+) symporter. In Streptococcus pyogenes serotype M4 (strain MGAS10750), this protein is Probable potassium transport system protein Kup.